The primary structure comprises 455 residues: Golgi pH regulator (455 aa).

A run of 2 helical transmembrane segments spans residues 5–25 (IDSS…WLFF) and 46–66 (VTFA…LGVL). The N-linked (GlcNAc...) asparagine glycan is linked to Asn67. 3 consecutive transmembrane segments (helical) span residues 79 to 99 (LCVI…YFVV), 111 to 131 (LFAC…GDPF), and 150 to 170 (VGVI…VNCP). Residues Asn180 and Asn243 are each glycosylated (N-linked (GlcNAc...) asparagine). 4 helical membrane-spanning segments follow: residues 290–310 (GYFF…NIVF), 343–363 (ISFI…LITL), 378–398 (VIVL…VLLI), and 425–445 (WFDV…YLAH).

This sequence belongs to the Golgi pH regulator (TC 1.A.38) family. As to quaternary structure, homotrimer.

The protein localises to the golgi apparatus membrane. It carries out the reaction iodide(out) = iodide(in). The catalysed reaction is chloride(in) = chloride(out). The enzyme catalyses bromide(in) = bromide(out). It catalyses the reaction fluoride(in) = fluoride(out). Its function is as follows. Voltage-gated channel that enables the transfer of anions such as iodide, chloride, bromide and fluoride which may function in counter-ion conductance and participates in Golgi acidification. The chain is Golgi pH regulator from Gallus gallus (Chicken).